Here is a 213-residue protein sequence, read N- to C-terminus: MGNRAEEDYNFVFKVVLIGESGVGKTNLLSRFTRNEFSHDSRTTIGVEFSTRTVMLGTAAIKAQIWDTAGLERYRAITSAYYRGAVGALLVFDLTKHQTYAVVERWLKELYDHAEATIVVMLVGNKSDLSQSREVPTEEARMFAENNGLLFLETSALDSTNVELAFETVLKEIFAKVSKQRQNNARTNAVTLGSGPAGQELGPGEKRACCISL.

S21, G24, K25, T26, N27, S38, H39, T43, and T44 together coordinate GTP. T26 contributes to the Mg(2+) binding site. Short sequence motifs (switch) lie at residues 35–49 and 67–84; these read NEFS…GVEF and DTAG…YYRG. Mg(2+)-binding residues include T44 and D67. GTP contacts are provided by G70, N125, K126, D128, A156, and L157. S-geranylgeranyl cysteine attachment occurs at residues C209 and C210. Residue C210 is modified to Cysteine methyl ester. The propeptide at 211-213 is removed in mature form; that stretch reads ISL.

It belongs to the small GTPase superfamily. Rab family. In terms of assembly, interacts (GTP-bound form) with RAB11FIP1, RAB11FIP2, RAB11FIP3 and RAB11FIP4. Interacts (via the hypervariable C-terminal region) with ITGB1 (via the cytoplasmic region); the interaction is GTP-dependent. Interacts with ITGAV. Associates with the integrin alpha-V/beta-1 heterodimer. Interacts with VPS33B. The cofactor is Mg(2+).

The protein resides in the cell membrane. It is found in the cell projection. It localises to the pseudopodium membrane. Its subcellular location is the cytoplasmic vesicle. The catalysed reaction is GTP + H2O = GDP + phosphate + H(+). Regulated by guanine nucleotide exchange factors (GEFs) which promote the exchange of bound GDP for free GTP. Regulated by GTPase activating proteins (GAPs) which increase the GTP hydrolysis activity. Inhibited by GDP dissociation inhibitors (GDIs) which prevent Rab-GDP dissociation. Its function is as follows. The small GTPases Rab are key regulators of intracellular membrane trafficking, from the formation of transport vesicles to their fusion with membranes. Rabs cycle between an inactive GDP-bound form and an active GTP-bound form that is able to recruit to membranes different set of downstream effectors directly responsible for vesicle formation, movement, tethering and fusion. RAB25 regulates epithelial cell differentiation, proliferation and survival, thereby playing key roles in tumorigenesis. Promotes invasive migration of cells in which it functions to localize and maintain integrin alpha-V/beta-1 at the tips of extending pseudopodia. Involved in the regulation of epithelial morphogenesis through the control of CLDN4 expression and localization at tight junctions. May selectively regulate the apical recycling pathway. Together with MYO5B regulates transcytosis. This is Ras-related protein Rab-25 (RAB25) from Bos taurus (Bovine).